The following is a 164-amino-acid chain: Peptidyl-prolyl cis-trans isomerase B (164 aa).

The PPIase cyclophilin-type domain occupies 1–162 (MVTFHTNHGD…EDVIIESVTV (162 aa)).

It belongs to the cyclophilin-type PPIase family.

Its subcellular location is the cytoplasm. It catalyses the reaction [protein]-peptidylproline (omega=180) = [protein]-peptidylproline (omega=0). Its activity is regulated as follows. Inhibition by cyclosporin A with a Ki of 25 to 50 mu-mol, a concentration 1000-fold higher than that required for eukaryotic PPIases. In terms of biological role, PPIases accelerate the folding of proteins. It catalyzes the cis-trans isomerization of proline imidic peptide bonds in oligopeptides. In Escherichia coli (strain K12), this protein is Peptidyl-prolyl cis-trans isomerase B (ppiB).